The chain runs to 335 residues: AA9 family lytic polysaccharide monooxygenase A (335 aa).

The first 21 residues, 1 to 21, serve as a signal peptide directing secretion; sequence MSSFITKTVLAALVAAAGVRA. Positions 22 and 107 each coordinate Cu(2+). Cys-77 and Cys-196 are oxidised to a cystine. O2-binding residues include His-182 and Gln-191. Residue Tyr-193 participates in Cu(2+) binding. Positions 241 to 335 are disordered; sequence PKMNIAGGSS…ARRHARDMMN (95 aa). Positions 251 to 303 are enriched in low complexity; it reads GAAPSTPATPTTGSGSDTPSNTAAPVESAPAESAAPVESAPAAGNGNQNNGGA. Residues 321–335 show a composition bias toward basic residues; sequence CKAKKARRHARDMMN.

This sequence belongs to the polysaccharide monooxygenase AA9 family. Cu(2+) is required as a cofactor.

Its subcellular location is the secreted. The enzyme catalyses [(1-&gt;4)-beta-D-glucosyl]n+m + reduced acceptor + O2 = 4-dehydro-beta-D-glucosyl-[(1-&gt;4)-beta-D-glucosyl]n-1 + [(1-&gt;4)-beta-D-glucosyl]m + acceptor + H2O.. In terms of biological role, lytic polysaccharide monooxygenase (LPMO) that depolymerizes crystalline and amorphous polysaccharides via the oxidation of scissile alpha- or beta-(1-4)-glycosidic bonds, yielding C1 or C4 oxidation products. Catalysis by LPMOs requires the reduction of the active-site copper from Cu(II) to Cu(I) by a reducing agent and H(2)O(2) or O(2) as a cosubstrate. Is capable of cleaving cellulose, but not chitin. Is also active on tamarind xyloglucan and longer xyloglucan oligosaccharides. Has no activity toward shorter cellooligosaccharides (Glc3-6), as well as toward the xyloglucan-heptamer, birchwood xylan, wheat arabinoxylan, konjac glucomannan, ivory nut mannan, beta-glucan from barley, lichenan from Icelandic moss, starch, and spruce galactoglucomannan. Has unprecedented broad specificity on xyloglucan, cleaving any glycosidicbond in theb-glucan main chain, regardless of xylosyl substitutions. When incubated with a mixture of xyloglucan and cellulose, efficiently attacks the xyloglucan, whereas cellulose conversion is inhibited, suggesting that removal of hemicellulose may be the true function of this LPMO during biomass conversion. This chain is AA9 family lytic polysaccharide monooxygenase A, found in Gibberella zeae (strain ATCC MYA-4620 / CBS 123657 / FGSC 9075 / NRRL 31084 / PH-1) (Wheat head blight fungus).